Consider the following 363-residue polypeptide: 3,4-dihydroxy-2-butanone 4-phosphate synthase (363 aa).

The interval 1–201 (MTLSTAQEII…VADLIEYRNK (201 aa)) is DHBP synthase. D-ribulose 5-phosphate is bound by residues 27–28 (RE), Asp32, 140–144 (RAGHT), and Glu164. Glu28 contacts Mg(2+). His143 serves as a coordination point for Mg(2+). The segment at 202-363 (YETMIERISE…GLEIVEYVCS (162 aa)) is GTP cyclohydrolase II-like.

The protein in the N-terminal section; belongs to the DHBP synthase family. It in the C-terminal section; belongs to the GTP cyclohydrolase II family. The cofactor is Mg(2+). Mn(2+) serves as cofactor.

It catalyses the reaction D-ribulose 5-phosphate = (2S)-2-hydroxy-3-oxobutyl phosphate + formate + H(+). The protein operates within cofactor biosynthesis; riboflavin biosynthesis; 2-hydroxy-3-oxobutyl phosphate from D-ribulose 5-phosphate: step 1/1. Functionally, catalyzes the conversion of D-ribulose 5-phosphate to formate and 3,4-dihydroxy-2-butanone 4-phosphate. This chain is 3,4-dihydroxy-2-butanone 4-phosphate synthase (ribB), found in Photobacterium phosphoreum.